We begin with the raw amino-acid sequence, 109 residues long: Protein NATD1 (109 aa).

An N-acetyltransferase domain is found at 18-108 (EHDRKRRQFS…PLPQYLERLQ (91 aa)).

The protein belongs to the NATD1 family.

This Xenopus tropicalis (Western clawed frog) protein is Protein NATD1 (natd1).